Consider the following 327-residue polypeptide: Biotin synthase (327 aa).

Residues 49–275 (RFGREVSLCS…VNPHAEVRMA (227 aa)) form the Radical SAM core domain. Residues C67, C71, and C74 each coordinate [4Fe-4S] cluster. Positions 112, 143, 203, and 273 each coordinate [2Fe-2S] cluster.

This sequence belongs to the radical SAM superfamily. Biotin synthase family. Homodimer. Requires [4Fe-4S] cluster as cofactor. It depends on [2Fe-2S] cluster as a cofactor.

The catalysed reaction is (4R,5S)-dethiobiotin + (sulfur carrier)-SH + 2 reduced [2Fe-2S]-[ferredoxin] + 2 S-adenosyl-L-methionine = (sulfur carrier)-H + biotin + 2 5'-deoxyadenosine + 2 L-methionine + 2 oxidized [2Fe-2S]-[ferredoxin]. Its pathway is cofactor biosynthesis; biotin biosynthesis; biotin from 7,8-diaminononanoate: step 2/2. Its function is as follows. Catalyzes the conversion of dethiobiotin (DTB) to biotin by the insertion of a sulfur atom into dethiobiotin via a radical-based mechanism. The chain is Biotin synthase from Maridesulfovibrio salexigens (strain ATCC 14822 / DSM 2638 / NCIMB 8403 / VKM B-1763) (Desulfovibrio salexigens).